A 465-amino-acid polypeptide reads, in one-letter code: Fusarisetin A cluster transcription factor fsa5 (465 aa).

The zn(2)-C6 fungal-type DNA-binding region spans C13–C47. The tract at residues S58–P88 is disordered. Polar residues predominate over residues S68–V84.

It localises to the nucleus. Transcription activator that specifically regulates the expression of the gene cluster that mediates the biosynthesis of fusarisetin A. This is Fusarisetin A cluster transcription factor fsa5 from Fusarium sp. (strain FN080326).